The sequence spans 171 residues: MACKSSRSLLLLATVMVSVFAAAAAAAAATDCSPGVAFPTNLLGHCRDYVLQQTCAVFTPGSKLPEWMTSAELNYPGQPYLAKLYCCQELAEIPQQCRCEALRYFMALPVPSQPVDPSTGNVGQSGLMDLPGCPREMQRDFVRLLVAPGQCNLATIHNVRYCPAVEQPLWI.

An N-terminal signal peptide occupies residues 1-24 (MACKSSRSLLLLATVMVSVFAAAA).

Belongs to the protease inhibitor I6 (cereal trypsin/alpha-amylase inhibitor) family. Heterotetramer of one CMa, one CMb and two CMd chains. In terms of processing, five disulfide bonds, which are essential for the inhibitor activity, are probably present. In terms of tissue distribution, endosperm.

It localises to the secreted. Its function is as follows. Part of a complex with inhibitory activity, but CMd is inactive as a separate subunit. This Hordeum vulgare (Barley) protein is Alpha-amylase/trypsin inhibitor CMd (IAT3).